The following is a 432-amino-acid chain: Adenylosuccinate synthetase (432 aa).

Residues 13 to 19 (GDEGKGK) and 41 to 43 (GHT) contribute to the GTP site. The active-site Proton acceptor is the aspartate 14. Residues aspartate 14 and glycine 41 each coordinate Mg(2+). IMP contacts are provided by residues 14–17 (DEGK), 39–42 (NAGH), threonine 130, arginine 144, glutamine 225, threonine 240, and arginine 304. Histidine 42 acts as the Proton donor in catalysis. 300–306 (ATTGRRR) is a substrate binding site. Residues arginine 306, 332 to 334 (KLD), and 415 to 417 (STG) contribute to the GTP site.

Belongs to the adenylosuccinate synthetase family. As to quaternary structure, homodimer. Mg(2+) serves as cofactor.

Its subcellular location is the cytoplasm. It catalyses the reaction IMP + L-aspartate + GTP = N(6)-(1,2-dicarboxyethyl)-AMP + GDP + phosphate + 2 H(+). It participates in purine metabolism; AMP biosynthesis via de novo pathway; AMP from IMP: step 1/2. Its function is as follows. Plays an important role in the de novo pathway of purine nucleotide biosynthesis. Catalyzes the first committed step in the biosynthesis of AMP from IMP. In Enterobacter sp. (strain 638), this protein is Adenylosuccinate synthetase.